A 347-amino-acid chain; its full sequence is KIN17-like protein KLP (347 aa).

The short motif at 222–225 is the Nuclear localization signal (NLS) element; that stretch reads KRKR.

The protein belongs to the KIN17 family.

It is found in the cytoplasm. It localises to the nucleus. May act as repressor of root growth during copper excess and of hypocotyl growth in the dark. The sequence is that of KIN17-like protein KLP from Arabidopsis thaliana (Mouse-ear cress).